The chain runs to 209 residues: Probable nicotinate-nucleotide adenylyltransferase (209 aa).

The protein belongs to the NadD family.

The enzyme catalyses nicotinate beta-D-ribonucleotide + ATP + H(+) = deamido-NAD(+) + diphosphate. The protein operates within cofactor biosynthesis; NAD(+) biosynthesis; deamido-NAD(+) from nicotinate D-ribonucleotide: step 1/1. Functionally, catalyzes the reversible adenylation of nicotinate mononucleotide (NaMN) to nicotinic acid adenine dinucleotide (NaAD). This chain is Probable nicotinate-nucleotide adenylyltransferase, found in Hydrogenovibrio crunogenus (strain DSM 25203 / XCL-2) (Thiomicrospira crunogena).